The following is a 391-amino-acid chain: Aspartate carbamoyltransferase 3, chloroplastic (391 aa).

A chloroplast-targeting transit peptide spans 1-69 (MTASSSLFSC…SKCDKMIKTR (69 aa)). Carbamoyl phosphate is bound by residues Arg-137 and Thr-138. Arg-137 and Thr-138 together coordinate UMP. Lys-167 serves as a coordination point for L-aspartate. Positions 188, 216, and 219 each coordinate carbamoyl phosphate. 2 residues coordinate UMP: Arg-188 and His-216. Arg-249 and Arg-311 together coordinate UMP. Positions 249 and 311 each coordinate L-aspartate. Carbamoyl phosphate is bound by residues Leu-351 and Pro-352.

This sequence belongs to the aspartate/ornithine carbamoyltransferase superfamily. ATCase family. In terms of assembly, homotrimer.

The protein localises to the plastid. The protein resides in the chloroplast. The catalysed reaction is carbamoyl phosphate + L-aspartate = N-carbamoyl-L-aspartate + phosphate + H(+). Its pathway is pyrimidine metabolism; UMP biosynthesis via de novo pathway; (S)-dihydroorotate from bicarbonate: step 2/3. Feedback inhibited by UMP. In terms of biological role, catalyzes the condensation of carbamoyl phosphate and aspartate to form carbamoyl aspartate and inorganic phosphate, the committed step in the de novo pyrimidine nucleotide biosynthesis pathway. In Pisum sativum (Garden pea), this protein is Aspartate carbamoyltransferase 3, chloroplastic (PYRB3).